The chain runs to 77 residues: Translation initiation factor IF-1, chloroplastic (77 aa).

Residues 1–71 form the S1-like domain; the sequence is MKEQKWIHEG…TRGRIIYRLR (71 aa).

This sequence belongs to the IF-1 family. As to quaternary structure, component of the 30S ribosomal translation pre-initiation complex which assembles on the 30S ribosome in the order IF-2 and IF-3, IF-1 and N-formylmethionyl-tRNA(fMet); mRNA recruitment can occur at any time during PIC assembly.

Its subcellular location is the plastid. It is found in the chloroplast. Functionally, one of the essential components for the initiation of protein synthesis. Stabilizes the binding of IF-2 and IF-3 on the 30S subunit to which N-formylmethionyl-tRNA(fMet) subsequently binds. Helps modulate mRNA selection, yielding the 30S pre-initiation complex (PIC). Upon addition of the 50S ribosomal subunit IF-1, IF-2 and IF-3 are released leaving the mature 70S translation initiation complex. In Spinacia oleracea (Spinach), this protein is Translation initiation factor IF-1, chloroplastic.